A 1009-amino-acid polypeptide reads, in one-letter code: MICAL-like protein 2 (1009 aa).

One can recognise a Calponin-homology (CH) domain in the interval 1 to 107; sequence MAAIKALQEW…YVSQYYNYFH (107 aa). The interval 1–260 is forms an intramolecular interaction with the C-terminal coiled coil domain keeping the protein in a closed conformation; sequence MAAIKALQEW…KSSNLASRKP (260 aa). A phosphoserine mark is found at Ser-110, Ser-143, and Ser-153. Disordered stretches follow at residues 114–180, 247–268, 348–447, and 655–834; these read GMAG…PGTA, SVSP…ADTR, NSSP…TSKV, and SPSI…TSPV. Polar residues predominate over residues 144 to 171; the sequence is PAQTQRSPLSPARTNPVVQRNEGGSQRP. In terms of domain architecture, LIM zinc-binding spans 186–248; sequence SICGVCGKHV…THHSSEVTSV (63 aa). Ser-249 is subject to Phosphoserine. Residues 261–393 form a necessary and sufficient for interaction with actinins region; the sequence is GGVTADTRPF…QGQTASKGVK (133 aa). The interval 261–805 is mediates targeting to the cell plasma membrane; sequence GGVTADTRPF…EDGTRSCKEE (545 aa). The segment covering 348–419 has biased composition (polar residues); it reads NSSPIGWSSP…AWTSSASKTQ (72 aa). Over residues 430–442 the composition is skewed to pro residues; the sequence is PSAPAPASAPAPA. A compositionally biased stretch (basic and acidic residues) spans 694–730; that stretch reads EGWRARLKPVDKKTPAGRSLEQKEPVLAEPRIGDTSR. 2 stretches are compositionally biased toward low complexity: residues 731–746 and 755–769; these read KASS…TLTS and PAGS…SPSP. Residues Ser-766 and Ser-768 each carry the phosphoserine modification. The span at 791–817 shows a compositional bias: basic and acidic residues; sequence EPKKQEDGTRSCKEEKSPTRWSRERSA. Residues 806 to 913 form a forms an intramolecular interaction with the N-terminal Calponin-homology and LIM zinc-binding domains-containing region keeping the protein in a closed conformation region; it reads KSPTRWSRER…LMYKSKDQRL (108 aa). Ser-832 bears the Phosphoserine mark. A bMERB domain is found at 833–980; sequence PVRLHPDYIP…EQEEDQMLEN (148 aa). Residues 841-880 adopt a coiled-coil conformation; that stretch reads IPQEELQRQLQDIESQLDALELRGVELEKRLRAAEGDASE. Residues 913 to 1009 are mediates interaction with RAB13 and is required for transition from the closed to the open conformation; sequence LEEQQLDLQG…WSSKSKSGQA (97 aa).

Interacts with RAB13 (GTP-bound form); competes with RAB8A and is involved in tight junctions assembly. Interacts with RAB8A; competes with RAB13 and is involved in E-cadherin endocytic recycling. Interacts with RAB8B. Interacts (preferentially in opened conformation) with ACTN1 and ACTN4; stimulated by RAB13 activation. Interacts (via calponin-homology (CH) domain) with the filamins FLNA, FLNB and FLNC (via actin-binding domain). As to expression, detected in brain, lung, liver and kidney (at protein level).

It is found in the cell membrane. The protein resides in the cell junction. It localises to the tight junction. The protein localises to the recycling endosome. Its subcellular location is the cell projection. It is found in the neuron projection. The protein resides in the cytoplasm. It localises to the cytoskeleton. Functionally, effector of small Rab GTPases RAB8A and RAB13 which is involved in junctional complexes assembly through the regulation of cell adhesion molecules transport to the plasma membrane and actin cytoskeleton reorganization. Regulates the endocytic recycling of occludins, claudins and E-cadherin to the plasma membrane and may thereby regulate the establishment of tight junctions and adherens junctions. In parallel, may regulate actin cytoskeleton reorganization directly through interaction with F-actin or indirectly through actinins and filamins. Undergoes liquid-liquid phase separation to form tubular recycling endosomes. Plays 2 sequential roles in the biogenesis of tubular recycling endosomes: first organizes phase separation and then the closed form formed by interaction with RAB8A promotes endosomal tubulation. The polypeptide is MICAL-like protein 2 (Micall2) (Mus musculus (Mouse)).